Consider the following 123-residue polypeptide: Large ribosomal subunit protein bL20 (123 aa).

It belongs to the bacterial ribosomal protein bL20 family.

Its function is as follows. Binds directly to 23S ribosomal RNA and is necessary for the in vitro assembly process of the 50S ribosomal subunit. It is not involved in the protein synthesizing functions of that subunit. The sequence is that of Large ribosomal subunit protein bL20 from Ehrlichia ruminantium (strain Gardel).